A 326-amino-acid chain; its full sequence is GMP reductase (326 aa).

Catalysis depends on cysteine 175, which acts as the Thioimidate intermediate. 204 to 227 contacts NADP(+); the sequence is IIADGGIRTHGDIAKSVRFGATMV.

Belongs to the IMPDH/GMPR family. GuaC type 2 subfamily.

The enzyme catalyses IMP + NH4(+) + NADP(+) = GMP + NADPH + 2 H(+). Catalyzes the irreversible NADPH-dependent deamination of GMP to IMP. It functions in the conversion of nucleobase, nucleoside and nucleotide derivatives of G to A nucleotides, and in maintaining the intracellular balance of A and G nucleotides. The chain is GMP reductase from Bacillus licheniformis (strain ATCC 14580 / DSM 13 / JCM 2505 / CCUG 7422 / NBRC 12200 / NCIMB 9375 / NCTC 10341 / NRRL NRS-1264 / Gibson 46).